The sequence spans 199 residues: Early activation antigen CD69 (199 aa).

Positions 1 to 29 are disordered; sequence MSSENCFVAENSSLHPESGQENDATSPHF. The Cytoplasmic segment spans residues 1 to 40; it reads MSSENCFVAENSSLHPESGQENDATSPHFSTRHEGSFQVP. Residues 41 to 61 form a helical; Signal-anchor for type II membrane protein membrane-spanning segment; that stretch reads VLCAVMNVVFITILIIALIAL. Topologically, residues 62 to 199 are extracellular; it reads SVGQYNCPGQ…LYWICNKPYK (138 aa). 3 cysteine pairs are disulfide-bonded: Cys-85/Cys-96, Cys-113/Cys-194, and Cys-173/Cys-186. In terms of domain architecture, C-type lectin spans 92–195; the sequence is YQRKCYFIST…CEKNLYWICN (104 aa). Asn-166 carries N-linked (GlcNAc...) asparagine glycosylation.

In terms of assembly, homodimer; disulfide-linked. Interacts with S100A8 and S100A9. Interacts with galactin-1/LGALS1. Interacts with S1PR1; this interaction mediates S1PR1 degradation. In terms of processing, constitutive Ser/Thr phosphorylation in both mature thymocytes and activated T-lymphocytes. In terms of tissue distribution, expressed on the surface of activated T-cells, B-cells, natural killer cells, neutrophils, eosinophils, epidermal Langerhans cells and platelets.

It is found in the cell membrane. Functionally, transmembrane protein expressed mainly on T-cells resident in mucosa that plays an essential role in immune cell homeostasis. Rapidly expressed on the surface of platelets, T-lymphocytes and NK cells upon activation by various stimuli, such as antigen recognition or cytokine signaling, stimulates different signaling pathways in different cell types. Negatively regulates Th17 cell differentiation through its carbohydrate dependent interaction with galectin-1/LGALS1 present on immature dendritic cells. Association of CD69 cytoplasmic tail with the JAK3/STAT5 signaling pathway regulates the transcription of RORgamma/RORC and, consequently, differentiation toward the Th17 lineage. Also acts via the S100A8/S100A9 complex present on peripheral blood mononuclear cells to promote the conversion of naive CD4 T-cells into regulatory T-cells. Acts as an oxidized low-density lipoprotein (oxLDL) receptor in CD4 T-lymphocytes and negatively regulates the inflammatory response by inducing the expression of PDCD1 through the activation of NFAT. Participates in adipose tissue-derived mesenchymal stem cells (ASCs)-mediated protection against P.aeruginosa infection. Mechanistically, specifically recognizes P.aeruginosa to promote ERK1 activation, followed by granulocyte-macrophage colony-stimulating factor (GM-CSF) and other inflammatory cytokines secretion. In eosinophils, induces IL-10 production through the ERK1/2 pathway. Negatively regulates the chemotactic responses of effector lymphocytes and dendritic cells (DCs) to sphingosine 1 phosphate/S1P by acting as a S1PR1 receptor agonist and facilitating the internalization and degradation of the receptor. The protein is Early activation antigen CD69 (CD69) of Homo sapiens (Human).